The primary structure comprises 457 residues: Transmembrane protein 143 (457 aa).

Helical transmembrane passes span 264–284 and 285–305; these read ILNVTLIVSGVVFFVNVGMVV and LSDLKMATSLLLLLFAAFMGL. Serine 316 carries the post-translational modification Phosphoserine. The span at 429-439 shows a compositional bias: polar residues; that stretch reads LSSPKSAPSDD. The interval 429–457 is disordered; sequence LSSPKSAPSDDNSLEKPLGPAQPSHLVGN.

Its subcellular location is the membrane. This is Transmembrane protein 143 (TMEM143) from Bos taurus (Bovine).